The chain runs to 434 residues: UDP-N-acetylmuramoylalanine--D-glutamate ligase (434 aa).

113 to 119 (GSNGKST) lines the ATP pocket.

It belongs to the MurCDEF family.

The protein localises to the cytoplasm. It catalyses the reaction UDP-N-acetyl-alpha-D-muramoyl-L-alanine + D-glutamate + ATP = UDP-N-acetyl-alpha-D-muramoyl-L-alanyl-D-glutamate + ADP + phosphate + H(+). The protein operates within cell wall biogenesis; peptidoglycan biosynthesis. Functionally, cell wall formation. Catalyzes the addition of glutamate to the nucleotide precursor UDP-N-acetylmuramoyl-L-alanine (UMA). The chain is UDP-N-acetylmuramoylalanine--D-glutamate ligase from Pasteurella multocida (strain Pm70).